The following is a 298-amino-acid chain: 4-diphosphocytidyl-2-C-methyl-D-erythritol kinase (298 aa).

The active site involves Lys-25. ATP is bound at residue 109–119 (PVGGGFGGGSS). Residue Asp-151 is part of the active site.

This sequence belongs to the GHMP kinase family. IspE subfamily.

It catalyses the reaction 4-CDP-2-C-methyl-D-erythritol + ATP = 4-CDP-2-C-methyl-D-erythritol 2-phosphate + ADP + H(+). The protein operates within isoprenoid biosynthesis; isopentenyl diphosphate biosynthesis via DXP pathway; isopentenyl diphosphate from 1-deoxy-D-xylulose 5-phosphate: step 3/6. Its function is as follows. Catalyzes the phosphorylation of the position 2 hydroxy group of 4-diphosphocytidyl-2C-methyl-D-erythritol. The sequence is that of 4-diphosphocytidyl-2-C-methyl-D-erythritol kinase from Xylella fastidiosa (strain 9a5c).